The chain runs to 614 residues: Threonine--tRNA ligase (614 aa).

The editing domain stretch occupies residues 1-138 (MRTLMIHSDY…HPLSELSRTI (138 aa)). Residues 133 to 157 (ELSRTITTEPEEESEDSEEEPSEPS) are disordered. Over residues 141–154 (EPEEESEDSEEEPS) the composition is skewed to acidic residues. Residues 200–495 (PHVRLMREKE…TDKGNKPSLP (296 aa)) form a catalytic region. Zn(2+) is bound by residues cysteine 292, histidine 344, and histidine 466.

This sequence belongs to the class-II aminoacyl-tRNA synthetase family. As to quaternary structure, homodimer. The cofactor is Zn(2+).

It localises to the cytoplasm. The catalysed reaction is tRNA(Thr) + L-threonine + ATP = L-threonyl-tRNA(Thr) + AMP + diphosphate + H(+). In terms of biological role, catalyzes the attachment of threonine to tRNA(Thr) in a two-step reaction: L-threonine is first activated by ATP to form Thr-AMP and then transferred to the acceptor end of tRNA(Thr). Also edits incorrectly charged L-seryl-tRNA(Thr). The sequence is that of Threonine--tRNA ligase from Methanosphaera stadtmanae (strain ATCC 43021 / DSM 3091 / JCM 11832 / MCB-3).